The following is an 87-amino-acid chain: Small ribosomal subunit protein bS20 (87 aa).

This sequence belongs to the bacterial ribosomal protein bS20 family.

In terms of biological role, binds directly to 16S ribosomal RNA. This chain is Small ribosomal subunit protein bS20, found in Alkaliphilus metalliredigens (strain QYMF).